The sequence spans 255 residues: 5'-nucleotidase SurE (255 aa).

A divalent metal cation contacts are provided by Asp-8, Asp-9, Ser-40, and Asn-92.

The protein belongs to the SurE nucleotidase family. The cofactor is a divalent metal cation.

The protein resides in the cytoplasm. The catalysed reaction is a ribonucleoside 5'-phosphate + H2O = a ribonucleoside + phosphate. Functionally, nucleotidase that shows phosphatase activity on nucleoside 5'-monophosphates. In Brucella abortus (strain S19), this protein is 5'-nucleotidase SurE.